Here is a 280-residue protein sequence, read N- to C-terminus: Phosphatidylserine decarboxylase proenzyme (280 aa).

Active-site charge relay system; for autoendoproteolytic cleavage activity residues include Asp-86, His-143, and Ser-246. The active-site Schiff-base intermediate with substrate; via pyruvic acid; for decarboxylase activity is Ser-246. Position 246 is a pyruvic acid (Ser); by autocatalysis (Ser-246).

The protein belongs to the phosphatidylserine decarboxylase family. PSD-B subfamily. Prokaryotic type I sub-subfamily. As to quaternary structure, heterodimer of a large membrane-associated beta subunit and a small pyruvoyl-containing alpha subunit. Requires pyruvate as cofactor. Is synthesized initially as an inactive proenzyme. Formation of the active enzyme involves a self-maturation process in which the active site pyruvoyl group is generated from an internal serine residue via an autocatalytic post-translational modification. Two non-identical subunits are generated from the proenzyme in this reaction, and the pyruvate is formed at the N-terminus of the alpha chain, which is derived from the carboxyl end of the proenzyme. The autoendoproteolytic cleavage occurs by a canonical serine protease mechanism, in which the side chain hydroxyl group of the serine supplies its oxygen atom to form the C-terminus of the beta chain, while the remainder of the serine residue undergoes an oxidative deamination to produce ammonia and the pyruvoyl prosthetic group on the alpha chain. During this reaction, the Ser that is part of the protease active site of the proenzyme becomes the pyruvoyl prosthetic group, which constitutes an essential element of the active site of the mature decarboxylase.

Its subcellular location is the cell membrane. It carries out the reaction a 1,2-diacyl-sn-glycero-3-phospho-L-serine + H(+) = a 1,2-diacyl-sn-glycero-3-phosphoethanolamine + CO2. The protein operates within phospholipid metabolism; phosphatidylethanolamine biosynthesis; phosphatidylethanolamine from CDP-diacylglycerol: step 2/2. Its function is as follows. Catalyzes the formation of phosphatidylethanolamine (PtdEtn) from phosphatidylserine (PtdSer). This Brevibacillus brevis (strain 47 / JCM 6285 / NBRC 100599) protein is Phosphatidylserine decarboxylase proenzyme.